A 276-amino-acid chain; its full sequence is Undecaprenyl-diphosphatase (276 aa).

A run of 7 helical transmembrane segments spans residues 40-60 (GLAF…TFFW), 98-118 (WLII…KDAI), 121-141 (IFRG…VLYY), 155-175 (MSFK…FPGI), 200-220 (FLLS…DIAT), 227-247 (VLLA…KLLM), and 255-275 (LDIF…LSVV).

Belongs to the UppP family.

It is found in the cell membrane. The enzyme catalyses di-trans,octa-cis-undecaprenyl diphosphate + H2O = di-trans,octa-cis-undecaprenyl phosphate + phosphate + H(+). In terms of biological role, catalyzes the dephosphorylation of undecaprenyl diphosphate (UPP). This is Undecaprenyl-diphosphatase from Methanosphaera stadtmanae (strain ATCC 43021 / DSM 3091 / JCM 11832 / MCB-3).